The chain runs to 200 residues: Large ribosomal subunit protein bL25 (200 aa).

It belongs to the bacterial ribosomal protein bL25 family. CTC subfamily. As to quaternary structure, part of the 50S ribosomal subunit; part of the 5S rRNA/L5/L18/L25 subcomplex. Contacts the 5S rRNA. Binds to the 5S rRNA independently of L5 and L18.

Functionally, this is one of the proteins that binds to the 5S RNA in the ribosome where it forms part of the central protuberance. This is Large ribosomal subunit protein bL25 from Leifsonia xyli subsp. xyli (strain CTCB07).